The sequence spans 131 residues: Large ribosomal subunit protein bL17 (131 aa).

The protein belongs to the bacterial ribosomal protein bL17 family. Part of the 50S ribosomal subunit. Contacts protein L32.

This chain is Large ribosomal subunit protein bL17, found in Bordetella petrii (strain ATCC BAA-461 / DSM 12804 / CCUG 43448).